A 272-amino-acid chain; its full sequence is MMACHC-like protein (272 aa).

Substrate contacts are provided by residues aspartate 121, 132–135 (ILMQ), and 146–148 (YYQ).

This sequence belongs to the MMACHC family. It depends on FAD as a cofactor. FMN serves as cofactor.

It is found in the cytoplasm. Catalyzes the reductive dealkylation of cyanocobalamin to cob(II)alamin, using FAD or FMN as cofactor and NADPH as cosubstrate. Can also catalyze the glutathione-dependent reductive demethylation of methylcobalamin, and, with much lower efficiency, the glutathione-dependent reductive demethylation of adenosylcobalamin. Under anaerobic conditions cob(I)alamin is the first product; it is highly reactive and is converted to aquocob(II)alamin in the presence of oxygen. Binds cyanocobalamin, adenosylcobalamin, methylcobalamin and other, related vitamin B12 derivatives. This chain is MMACHC-like protein (cblc-1), found in Caenorhabditis elegans.